A 223-amino-acid polypeptide reads, in one-letter code: Phosphoribosylformylglycinamidine synthase subunit PurQ (223 aa).

The Glutamine amidotransferase type-1 domain occupies Lys4 to Ala223. The active-site Nucleophile is the Cys87. Active-site residues include His195 and Glu197.

As to quaternary structure, part of the FGAM synthase complex composed of 1 PurL, 1 PurQ and 2 PurS subunits.

The protein resides in the cytoplasm. The catalysed reaction is N(2)-formyl-N(1)-(5-phospho-beta-D-ribosyl)glycinamide + L-glutamine + ATP + H2O = 2-formamido-N(1)-(5-O-phospho-beta-D-ribosyl)acetamidine + L-glutamate + ADP + phosphate + H(+). It catalyses the reaction L-glutamine + H2O = L-glutamate + NH4(+). It participates in purine metabolism; IMP biosynthesis via de novo pathway; 5-amino-1-(5-phospho-D-ribosyl)imidazole from N(2)-formyl-N(1)-(5-phospho-D-ribosyl)glycinamide: step 1/2. Part of the phosphoribosylformylglycinamidine synthase complex involved in the purines biosynthetic pathway. Catalyzes the ATP-dependent conversion of formylglycinamide ribonucleotide (FGAR) and glutamine to yield formylglycinamidine ribonucleotide (FGAM) and glutamate. The FGAM synthase complex is composed of three subunits. PurQ produces an ammonia molecule by converting glutamine to glutamate. PurL transfers the ammonia molecule to FGAR to form FGAM in an ATP-dependent manner. PurS interacts with PurQ and PurL and is thought to assist in the transfer of the ammonia molecule from PurQ to PurL. The polypeptide is Phosphoribosylformylglycinamidine synthase subunit PurQ (Corynebacterium efficiens (strain DSM 44549 / YS-314 / AJ 12310 / JCM 11189 / NBRC 100395)).